We begin with the raw amino-acid sequence, 148 residues long: Large ribosomal subunit protein bL9 (148 aa).

The protein belongs to the bacterial ribosomal protein bL9 family.

In terms of biological role, binds to the 23S rRNA. This is Large ribosomal subunit protein bL9 from Pseudomonas savastanoi pv. phaseolicola (strain 1448A / Race 6) (Pseudomonas syringae pv. phaseolicola (strain 1448A / Race 6)).